The sequence spans 675 residues: Acetyl-coenzyme A synthetase 1 (675 aa).

Residues 1 to 10 show a composition bias toward polar residues; that stretch reads MPESTQQSHL. The tract at residues 1–32 is disordered; sequence MPESTQQSHLSLDHEKMQQPPKGFTERSKTKP. CoA contacts are provided by residues 212-215 and T331; that span reads RGGK. ATP contacts are provided by residues 407–409, 431–436, D522, and R537; these read GEP and DTYWQT. S545 contacts CoA. An ATP-binding site is contributed by R548. R609 is a CoA binding site.

This sequence belongs to the ATP-dependent AMP-binding enzyme family.

The enzyme catalyses acetate + ATP + CoA = acetyl-CoA + AMP + diphosphate. This chain is Acetyl-coenzyme A synthetase 1 (ACS1), found in Candida albicans (Yeast).